The chain runs to 234 residues: Segregation and condensation protein A (234 aa).

Belongs to the ScpA family. As to quaternary structure, component of a cohesin-like complex composed of ScpA, ScpB and the Smc homodimer, in which ScpA and ScpB bind to the head domain of Smc. The presence of the three proteins is required for the association of the complex with DNA.

It is found in the cytoplasm. Functionally, participates in chromosomal partition during cell division. May act via the formation of a condensin-like complex containing Smc and ScpB that pull DNA away from mid-cell into both cell halves. In Streptococcus pyogenes serotype M5 (strain Manfredo), this protein is Segregation and condensation protein A.